Consider the following 312-residue polypeptide: Eukaryotic translation initiation factor 2 subunit 2 (312 aa).

Disordered regions lie at residues 26–104 (AALG…NLDM) and 125–146 (ADQA…SSTW). Ser44 carries the phosphoserine modification. Composition is skewed to acidic residues over residues 90–102 (AASE…EINL) and 125–142 (ADQA…DEDN). Ser133 carries the post-translational modification Phosphoserine. The residue at position 145 (Thr145) is a Phosphothreonine. The C4-type zinc finger occupies 260-284 (CHTCRSPETILQKDTRLFFLQCESC).

It belongs to the eIF-2-beta/eIF-5 family. Eukaryotic translation initiation factor 2 eIF2 is a heterotrimeric complex composed of an alpha, a beta and a gamma subunit.

The protein localises to the cytoplasm. It localises to the cytosol. In terms of biological role, component of the eIF2 complex that functions in the early steps of protein synthesis by forming a ternary complex with GTP and initiator tRNA. This complex binds to a 40S ribosomal subunit, followed by mRNA binding to form a 43S pre-initiation complex (43S PIC). Junction of the 60S ribosomal subunit to form the 80S initiation complex is preceded by hydrolysis of the GTP bound to eIF2 and release of an eIF2-GDP binary complex. In order for eIF2 to recycle and catalyze another round of initiation, the GDP bound to eIF2 must exchange with GTP by way of a reaction catalyzed by eIF2B. This chain is Eukaryotic translation initiation factor 2 subunit 2, found in Drosophila melanogaster (Fruit fly).